A 340-amino-acid chain; its full sequence is Phosphoribosylformylglycinamidine cyclo-ligase (340 aa).

The protein belongs to the AIR synthase family.

The protein resides in the cytoplasm. The enzyme catalyses 2-formamido-N(1)-(5-O-phospho-beta-D-ribosyl)acetamidine + ATP = 5-amino-1-(5-phospho-beta-D-ribosyl)imidazole + ADP + phosphate + H(+). The protein operates within purine metabolism; IMP biosynthesis via de novo pathway; 5-amino-1-(5-phospho-D-ribosyl)imidazole from N(2)-formyl-N(1)-(5-phospho-D-ribosyl)glycinamide: step 2/2. This Streptococcus uberis (strain ATCC BAA-854 / 0140J) protein is Phosphoribosylformylglycinamidine cyclo-ligase.